Reading from the N-terminus, the 1216-residue chain is MAAMAPGGGGSGSGVNPFLSDSDEDDDEVAATEDRRAGLRLGAGVGLDPGSAGSLSPQDPMALGSSARPGLAVEMSAAPAALGGSGETPARLSIDAIAAQLLRDQYLLTALELHTELLESGRELPRLRDYFSNPGNFERQSGTPPGMGAPGIPGASIVGGAGGREPSTTSGGGQLNRAGSISTLDSLDFARYSDDGNRETDERVAVLEFELRKAKETIQALRANLTKAAEHEVPLQERKNYKSSPEIQEPIKPLEKRALNFLVNEFLLKNNYKLTSITFSDENDDQDFELWDDVGLNIPKPPDLLQLYRDFGNHQVTGKDLVDVASGVDEDELEALTPILGNVPPTLDTPLPIENTLLVQKLEDKISLLNNEKWSLMEQIRRLESEMDILKAEHFATPAVGDSVQPSLVWSSQKDSEDNRQSPAVNSSDQEKTKDVHLEIPDAADSFIPKENSSGSFPRKEREELPPSSVSNKTTLHFDQPNRKLSPAFHQALLSFCRMSADSRLGSEVSRIADSEKSVMLMLGRCLPHIVPNVLLAKREELIPLILCTACLHPEPKERDQLLHILFNLIKRPDDEQRQMILTGCVAFARHVGPTRVEAELLPQCWEQINHKYPERRLLVAESCGALAPYLPKEIRSSLVLSMLQQMLMEDKADLVREAVIKSLGIIMGYIDDPDKYQQGFELLLSALGDPSERVVSATHQVFLPAYAAWTTELGNLQSHLIPTLLNKIEKLLREGEHGLDEHKLHMYLSALQSLIPSLFALVLQNAPFSSKAKLHGEVPHIEVTRFPRPMSPLQDVSTIIGSREQLAVLLQLYDYQLEHEGTTGWESLLWVVNQLLPQLIEIVGKINVTSTACVHEFSRFFWRLCRTFGKIFTNTKVKPQFQEILRLSEENIDSSAGNGVLTKATVPIYATGVLTCYIQEEDRKLLVGFLEDVMTLLSLSHAPLDSLKASFVELGANPAYHELLLTVLWYGVVHTSALVRCTAARMFELLVKGVNETLVAQRVVPALITLSSDPEISVRIATIPAFGTIMETVIQRELLERVKMQLASFLEDPQYQDQHSLHTEVIRTFGRVGPNAEPRFRDEFVIPHLHKLALVNNLQIVDSKKLDIATHLFEAYSALSCCFISEDLMVNHFLPGLRCLRTDMEHLSPEHEVILSSMIKECEQKVENKTVQEPPGSMSIAASLVSEDTKTKFLNKMGQLTTSGAMLANVFQRKK.

Over residues 1–13 (MAAMAPGGGGSGS) the composition is skewed to gly residues. Disordered regions lie at residues 1-67 (MAAM…GSSA) and 133-179 (NPGN…NRAG). Alanine 2 bears the N-acetylalanine mark. Serine 20 and serine 22 each carry phosphoserine. A compositionally biased stretch (acidic residues) spans 21 to 31 (DSDEDDDEVAA). At threonine 32 the chain carries Phosphothreonine. 2 positions are modified to phosphoserine: serine 54 and serine 56. The span at 142-154 (GTPPGMGAPGIPG) shows a compositional bias: low complexity. 2 positions are modified to phosphoserine: serine 180 and serine 182. Residue threonine 183 is modified to Phosphothreonine. Serine 186 is subject to Phosphoserine. Residues 197–231 (NRETDERVAVLEFELRKAKETIQALRANLTKAAEH) adopt a coiled-coil conformation. The LisH domain occupies 255–287 (EKRALNFLVNEFLLKNNYKLTSITFSDENDDQD). Residues 358–397 (LVQKLEDKISLLNNEKWSLMEQIRRLESEMDILKAEHFAT) are a coiled coil. Serine 385 is subject to Phosphoserine. Positions 409 to 473 (VWSSQKDSED…ELPPSSVSNK (65 aa)) are disordered. Residues 429-440 (DQEKTKDVHLEI) show a composition bias toward basic and acidic residues. At serine 453 the chain carries Phosphoserine. The segment at 497–779 (CRMSADSRLG…SSKAKLHGEV (283 aa)) is interaction with RAB11A and RAB11B. HEAT repeat units lie at residues 601–639 (LLPQ…RSSL) and 640–679 (VLSM…KYQQ). Serine 792 carries the post-translational modification Phosphoserine. The stretch at 1004–1042 (VVPALITLSSDPEISVRIATIPAFGTIMETVIQRELLER) is one HEAT 3 repeat. Serine 1149 is subject to Phosphoserine.

Interacts with RAB11A (VIA-GTP form). Interacts with RAB11B. Interacts (via the third HEAT repeat) with OSBP (via C-terminus). Found in a complex composed of RELCH, OSBP1 and RAB11A.

It localises to the recycling endosome. It is found in the golgi apparatus. The protein localises to the trans-Golgi network. Regulates intracellular cholesterol distribution from recycling endosomes to the trans-Golgi network through interactions with RAB11 and OSBP. Functions in membrane tethering and promotes OSBP-mediated cholesterol transfer between RAB11-bound recycling endosomes and OSBP-bound Golgi-like membranes. The protein is RAB11-binding protein RELCH (Relch) of Mus musculus (Mouse).